Consider the following 117-residue polypeptide: Immunoglobulin lambda variable 1-44 (117 aa).

Residues 1–19 (MASFPLLLTLLTHCAGSWA) form the signal peptide. A Pyrrolidone carboxylic acid modification is found at Q20. The interval 20 to 44 (QSVLTQPPSASGTPGQRVTISCSGS) is framework-1. Residues 20-117 (QSVLTQPPSA…CAAWDDSLNG (98 aa)) enclose the Ig-like domain. Polar residues predominate over residues 24–35 (TQPPSASGTPGQ). A disordered region spans residues 24-45 (TQPPSASGTPGQRVTISCSGSS). C41 and C108 are disulfide-bonded. A complementarity-determining-1 region spans residues 45 to 52 (SSNIGSNT). Residues 53–69 (VNWYQQLPGTAPKLLIY) are framework-2. The segment at 70–72 (SNN) is complementarity-determining-2. The framework-3 stretch occupies residues 73 to 108 (QRPSGVPDRFSGSKSGTSASLAISGLQSEDEADYYC). Residues 109-117 (AAWDDSLNG) are complementarity-determining-3.

Immunoglobulins are composed of two identical heavy chains and two identical light chains; disulfide-linked.

It localises to the secreted. It is found in the cell membrane. Its function is as follows. V region of the variable domain of immunoglobulin light chains that participates in the antigen recognition. Immunoglobulins, also known as antibodies, are membrane-bound or secreted glycoproteins produced by B lymphocytes. In the recognition phase of humoral immunity, the membrane-bound immunoglobulins serve as receptors which, upon binding of a specific antigen, trigger the clonal expansion and differentiation of B lymphocytes into immunoglobulins-secreting plasma cells. Secreted immunoglobulins mediate the effector phase of humoral immunity, which results in the elimination of bound antigens. The antigen binding site is formed by the variable domain of one heavy chain, together with that of its associated light chain. Thus, each immunoglobulin has two antigen binding sites with remarkable affinity for a particular antigen. The variable domains are assembled by a process called V-(D)-J rearrangement and can then be subjected to somatic hypermutations which, after exposure to antigen and selection, allow affinity maturation for a particular antigen. This chain is Immunoglobulin lambda variable 1-44, found in Homo sapiens (Human).